The sequence spans 154 residues: uncharacterized protein (154 aa).

Transmembrane regions (helical) follow at residues Thr5–Leu24, Phe29–Ala48, Pro53–Ala75, Ile87–Val109, and Ala124–Ile146.

The protein resides in the cell membrane. This is an uncharacterized protein from Archaeoglobus fulgidus (strain ATCC 49558 / DSM 4304 / JCM 9628 / NBRC 100126 / VC-16).